A 376-amino-acid chain; its full sequence is Actin-like protein 53D (376 aa).

Residues 1–40 form a necessary and sufficient for recruitment to the fusome and actin cones of spermatocyte cysts region; sequence MSSEVDSNSHHAAVVIDNGSGVCKAGFSPEDTPRAVFPSI.

This sequence belongs to the actin family. ARP1 subfamily. In terms of tissue distribution, high expression in males whereas expression in females is very low. In adult males, highest levels of expression are in the testis. In adult females, expressed only in the ovaries at very low levels. In larvae, highly expressed in the imaginal disk whereas in prepupae and pupae modest levels of expression occur in the fat body.

It localises to the cytoplasm. The protein localises to the cytoskeleton. Functionally, required for optimal embryo development, particularly under heat stress conditions. Also appears to have a role in negatively regulating spermatocyte cyst development. Under heat stress conditions, required for the correct organization and migration of nuclei during early embryogenesis, and therefore possibly functions by regulating embryonic actin networks during the heat stress response. This Drosophila melanogaster (Fruit fly) protein is Actin-like protein 53D.